The primary structure comprises 346 residues: Biotin synthase (346 aa).

In terms of domain architecture, Radical SAM core spans R38–T256. [4Fe-4S] cluster is bound by residues C53, C57, and C60. 4 residues coordinate [2Fe-2S] cluster: C97, C128, C188, and R260.

This sequence belongs to the radical SAM superfamily. Biotin synthase family. As to quaternary structure, homodimer. The cofactor is [4Fe-4S] cluster. It depends on [2Fe-2S] cluster as a cofactor.

The enzyme catalyses (4R,5S)-dethiobiotin + (sulfur carrier)-SH + 2 reduced [2Fe-2S]-[ferredoxin] + 2 S-adenosyl-L-methionine = (sulfur carrier)-H + biotin + 2 5'-deoxyadenosine + 2 L-methionine + 2 oxidized [2Fe-2S]-[ferredoxin]. The protein operates within cofactor biosynthesis; biotin biosynthesis; biotin from 7,8-diaminononanoate: step 2/2. Its function is as follows. Catalyzes the conversion of dethiobiotin (DTB) to biotin by the insertion of a sulfur atom into dethiobiotin via a radical-based mechanism. The polypeptide is Biotin synthase (Escherichia coli O157:H7).